The chain runs to 184 residues: Protein Syd (184 aa).

It belongs to the Syd family.

The protein localises to the cell inner membrane. Interacts with the SecY protein in vivo. May bind preferentially to an uncomplexed state of SecY, thus functioning either as a chelating agent for excess SecY in the cell or as a regulatory factor that negatively controls the translocase function. The sequence is that of Protein Syd from Edwardsiella ictaluri (strain 93-146).